We begin with the raw amino-acid sequence, 875 residues long: Neurotrypsin (875 aa).

An N-terminal signal peptide occupies residues 1 to 20 (MTLARFVLALMLGALPEVVG). Residue N26 is glycosylated (N-linked (GlcNAc...) asparagine). The segment at 29 to 88 (LHHSHRHSPPAGPHYPYYLPTQQRPPRTRPPPPLPRFPRPPRALPAQRPHALQAGHTPRP) is disordered. Pro residues predominate over residues 56–71 (TRPPPPLPRFPRPPRA). A Kringle domain is found at 93–165 (CPAGEPWVSV…GKVDWGYCDC (73 aa)). 20 cysteine pairs are disulfide-bonded: C93–C165, C109–C149, C138–C163, C195–C259, C208–C269, C239–C249, C305–C369, C318–C379, C349–C359, C412–C475, C425–C485, C455–C465, C525–C589, C538–C599, C569–C579, C619–C750, C661–C677, C765–C831, C794–C808, and C821–C850. SRCR domains lie at 170–271 (VRLR…TCSF), 280–381 (IRLA…SCTP), 387–487 (IRLA…ACYP), and 500–601 (VRLM…ICDY). A zymogen activation region region spans residues 619 to 630 (CGLRLLHRRQKR). The region spanning 631 to 874 (IIGGKNSLRG…FVPWIKSVTK (244 aa)) is the Peptidase S1 domain. H676 (charge relay system) is an active-site residue. N683 is a glycosylation site (N-linked (GlcNAc...) asparagine). D726 serves as the catalytic Charge relay system. S825 acts as the Charge relay system in catalysis.

This sequence belongs to the peptidase S1 family. In terms of tissue distribution, brain and Leydig cells of the testis.

Its subcellular location is the secreted. Its function is as follows. Plays a role in neuronal plasticity and the proteolytic action may subserve structural reorganizations associated with learning and memory operations. The protein is Neurotrypsin (PRSS12) of Homo sapiens (Human).